The primary structure comprises 159 residues: Cyclic pyranopterin monophosphate synthase (159 aa).

Substrate contacts are provided by residues 76–78 and 114–115; these read LCH and ME. Residue Asp-129 is part of the active site.

Belongs to the MoaC family. As to quaternary structure, homohexamer; trimer of dimers.

The enzyme catalyses (8S)-3',8-cyclo-7,8-dihydroguanosine 5'-triphosphate = cyclic pyranopterin phosphate + diphosphate. Its pathway is cofactor biosynthesis; molybdopterin biosynthesis. In terms of biological role, catalyzes the conversion of (8S)-3',8-cyclo-7,8-dihydroguanosine 5'-triphosphate to cyclic pyranopterin monophosphate (cPMP). The sequence is that of Cyclic pyranopterin monophosphate synthase from Oleidesulfovibrio alaskensis (strain ATCC BAA-1058 / DSM 17464 / G20) (Desulfovibrio alaskensis).